We begin with the raw amino-acid sequence, 239 residues long: Lysophospholipase-like protein 1 (239 aa).

The residue at position 2 (alanine 2) is an N-acetylalanine. Catalysis depends on charge relay system residues serine 125, aspartate 180, and histidine 212.

It belongs to the AB hydrolase superfamily. AB hydrolase 2 family.

It is found in the cytoplasm. Its subcellular location is the cytosol. It catalyses the reaction S-hexadecanoyl-L-cysteinyl-[protein] + H2O = L-cysteinyl-[protein] + hexadecanoate + H(+). Functionally, palmitoyl thioesterase that catalyzes depalmitoylation of CGAS and KCNMA1. Acts as a regulator of innate immunity by mediating depalmitoylation of CGAS, thereby preventing CGAS homodimerization and cyclic GMP-AMP synthase activity. Does not exhibit phospholipase nor triacylglycerol lipase activity, able to hydrolyze only short chain substrates due to its shallow active site. The polypeptide is Lysophospholipase-like protein 1 (Mus musculus (Mouse)).